Here is a 239-residue protein sequence, read N- to C-terminus: Vesicle-associated protein 1-2 (239 aa).

Residue M1 is modified to N-acetylmethionine. Residues 1–215 lie on the Cytoplasmic side of the membrane; that stretch reads MSNELLTIDP…RRESKRSKSG (215 aa). S2 bears the N-acetylserine; in Vesicle-associated protein 1-2, N-terminally processed mark. The region spanning 5 to 125 is the MSP domain; that stretch reads LLTIDPVDLQ…EETKLRVVYV (121 aa). The disordered stretch occupies residues 123–174; sequence VYVAPPRPPSPVREGSEEGSSPRASVSDNGNASDFTAAPRFSADRVDAQDNS. Phosphoserine is present on S132. A compositionally biased stretch (polar residues) spans 140-156; that stretch reads EGSSPRASVSDNGNASD. A Phosphoserine modification is found at S164. Residues 169-215 adopt a coiled-coil conformation; sequence DAQDNSSEARALVTKLTEEKNSAVQLNNRLQQELDQLRRESKRSKSG. A helical; Anchor for type IV membrane protein transmembrane segment spans residues 216–236; that stretch reads GIPFMYVLLVGLIGLILGYIM.

This sequence belongs to the VAMP-associated protein (VAP) (TC 9.B.17) family. Interacts with ORP3A. Binds to VLG at the endomembrane system.

It is found in the endoplasmic reticulum membrane. In terms of biological role, vesicle-associated protein that binds the oxysterol-binding protein ORP3A and allows its targeting to the ER. This chain is Vesicle-associated protein 1-2, found in Arabidopsis thaliana (Mouse-ear cress).